Consider the following 92-residue polypeptide: UPF0250 protein CGSHiEE_03170 (92 aa).

It belongs to the UPF0250 family.

This chain is UPF0250 protein CGSHiEE_03170, found in Haemophilus influenzae (strain PittEE).